A 102-amino-acid polypeptide reads, in one-letter code: Small ribosomal subunit protein uS10 (102 aa).

Residues 37-61 (PIPLPTKSLKITTRKSTDGEGSSSF) form a disordered region.

It belongs to the universal ribosomal protein uS10 family. In terms of assembly, part of the 30S ribosomal subunit.

Functionally, involved in the binding of tRNA to the ribosomes. This is Small ribosomal subunit protein uS10 from Methanococcus vannielii (strain ATCC 35089 / DSM 1224 / JCM 13029 / OCM 148 / SB).